We begin with the raw amino-acid sequence, 1463 residues long: DNA polymerase III PolC-type (1463 aa).

The Exonuclease domain maps to 425–581 (YVVFDVETTG…YDAEATGRLL (157 aa)).

The protein belongs to the DNA polymerase type-C family. PolC subfamily.

It is found in the cytoplasm. The catalysed reaction is DNA(n) + a 2'-deoxyribonucleoside 5'-triphosphate = DNA(n+1) + diphosphate. Its function is as follows. Required for replicative DNA synthesis. This DNA polymerase also exhibits 3' to 5' exonuclease activity. This Streptococcus pneumoniae serotype 2 (strain D39 / NCTC 7466) protein is DNA polymerase III PolC-type.